The following is a 134-amino-acid chain: Profilin-5 (134 aa).

It belongs to the profilin family. Occurs in many kinds of cells as a complex with monomeric actin in a 1:1 ratio. Specifically expressed in mature pollen grains. Expressed in germinating pollen grains. Expressed in growing pollen tubes (at protein level).

The protein resides in the cytoplasm. It localises to the cytoskeleton. Functionally, binds to actin monomers and regulates the organization of the actin cytoskeleton. At high concentrations, profilin prevents the polymerization of actin, whereas it enhances it at low concentrations. At low concentrations, associates with the poly-proline motif of formins to enhance actin filament elongation rate. Acts redundantly with PRF4 to regulate apical actin polymerization at the tip of pollen tube and control polarized pollen tube growth. Functions probably by favoring formin-mediated actin polymerization at pollen tube tips. In Arabidopsis thaliana (Mouse-ear cress), this protein is Profilin-5.